The sequence spans 194 residues: RNA polymerase II subunit A C-terminal domain phosphatase SSU72 like protein 6 (194 aa).

This sequence belongs to the SSU72 phosphatase family.

Its subcellular location is the nucleus. It carries out the reaction O-phospho-L-seryl-[protein] + H2O = L-seryl-[protein] + phosphate. The enzyme catalyses O-phospho-L-threonyl-[protein] + H2O = L-threonyl-[protein] + phosphate. Its function is as follows. Protein phosphatase that catalyzes the dephosphorylation of the C-terminal domain of RNA polymerase II. Plays a role in RNA processing and termination. The polypeptide is RNA polymerase II subunit A C-terminal domain phosphatase SSU72 like protein 6 (Homo sapiens (Human)).